A 361-amino-acid polypeptide reads, in one-letter code: Phospho-N-acetylmuramoyl-pentapeptide-transferase (361 aa).

Transmembrane regions (helical) follow at residues 18-38 (VFNY…ILVL), 73-93 (TMGG…WGDL), 97-117 (FIWV…MDDY), 135-155 (LLQS…ATTG), 168-188 (VLPN…VGSS), 196-216 (GLDG…GVFA), 235-255 (GAGE…GFLW), 263-283 (VFMG…TAVV), 288-308 (LVYF…ILQV), and 338-358 (KVIV…LATL).

It belongs to the glycosyltransferase 4 family. MraY subfamily. Mg(2+) serves as cofactor.

It is found in the cell inner membrane. It carries out the reaction UDP-N-acetyl-alpha-D-muramoyl-L-alanyl-gamma-D-glutamyl-meso-2,6-diaminopimeloyl-D-alanyl-D-alanine + di-trans,octa-cis-undecaprenyl phosphate = di-trans,octa-cis-undecaprenyl diphospho-N-acetyl-alpha-D-muramoyl-L-alanyl-D-glutamyl-meso-2,6-diaminopimeloyl-D-alanyl-D-alanine + UMP. Its pathway is cell wall biogenesis; peptidoglycan biosynthesis. Catalyzes the initial step of the lipid cycle reactions in the biosynthesis of the cell wall peptidoglycan: transfers peptidoglycan precursor phospho-MurNAc-pentapeptide from UDP-MurNAc-pentapeptide onto the lipid carrier undecaprenyl phosphate, yielding undecaprenyl-pyrophosphoryl-MurNAc-pentapeptide, known as lipid I. The sequence is that of Phospho-N-acetylmuramoyl-pentapeptide-transferase from Coxiella burnetii (strain CbuK_Q154) (Coxiella burnetii (strain Q154)).